We begin with the raw amino-acid sequence, 713 residues long: MMQESVTETISNSSMNQNGMSTLSSQLDAGSRDGRSSGDTSSEVSTVELLHLQQQQALQAARQLLLQQQTSGLKSPKSSDKQRPLQVPVSVAMMTPQVITPQQMQQILQQQVLSPQQLQALLQQQQAVMLQQQQLQEFYKKQQEQLHLQLLQQQQQQQQQQQQQQQQQQQQQQQQQQQQQQQQQQQQQQQHPGKQAKEQQQQQQQQQLAAQQLVFQQQLLQMQQLQQQQHLLSLQRQGLISIPPGQAALPVQSLPQAGLSPAEIQQLWKEVTGVHSMEDNGIKHGGLDLTTNNSSSTTSSTTSKASPPITHHSIVNGQSSVLNARRDSSSHEETGASHTLYGHGVCKWPGCESICEDFGQFLKHLNNEHALDDRSTAQCRVQMQVVQQLEIQLSKERERLQAMMTHLHMRPSEPKPSPKPLNLVSSVTMSKNMLETSPQSLPQTPTTPTAPVTPITQGPSVITPASVPNVGAIRRRHSDKYNIPMSSEIAPNYEFYKNADVRPPFTYATLIRQAIMESSDRQLTLNEIYSWFTRTFAYFRRNAATWKNAVRHNLSLHKCFVRVENVKGAVWTVDEVEYQKRRSQKITGSPTLVKNIPTSLGYGAALNASLQAALAESSLPLLSNPGLINNASSGLLQAVHEDLNGSLDHIDSNGNSSPGCSPQPHIHSIHVKEEPVIAEDEDCPMSLVTTANHSPELEDDREIEEEPLSEDLE.

Residues 1–28 are compositionally biased toward polar residues; sequence MMQESVTETISNSSMNQNGMSTLSSQLD. Disordered regions lie at residues 1–44 and 279–337; these read MMQE…SSEV and DNGI…TGAS. Low complexity predominate over residues 290-303; sequence TTNNSSSTTSSTTS. Over residues 313–322 the composition is skewed to polar residues; sequence SIVNGQSSVL. Residues 324–335 show a composition bias toward basic and acidic residues; that stretch reads ARRDSSSHEETG. The C2H2-type zinc-finger motif lies at 344–369; it reads GVCKWPGCESICEDFGQFLKHLNNEH. The interval 386-407 is leucine-zipper; that stretch reads VQQLEIQLSKERERLQAMMTHL. Residues 420 to 424 form a CTBP1-binding region; that stretch reads PLNLV. A compositionally biased stretch (low complexity) spans 436–457; that stretch reads TSPQSLPQTPTTPTAPVTPITQ. The disordered stretch occupies residues 436–463; that stretch reads TSPQSLPQTPTTPTAPVTPITQGPSVIT. Residues 502–592 constitute a DNA-binding region (fork-head); sequence RPPFTYATLI…SQKITGSPTL (91 aa). Disordered stretches follow at residues 647–666 and 676–713; these read LDHI…QPHI and VIAE…EDLE. Residues 697–713 show a composition bias toward acidic residues; sequence LEDDREIEEEPLSEDLE.

As to quaternary structure, forms homodimers and heterodimers with FOXP1 and FOXP4. Dimerization is required for DNA-binding. Interacts with CTBP1. Interacts with FOXP1. Interacts with TBR1. Interacts with ZMYM2.

It is found in the nucleus. Functionally, transcriptional repressor that may play a role in the specification and differentiation of lung epithelium. May also play a role in developing neural, gastrointestinal and cardiovascular tissues. Can act with CTBP1 to synergistically repress transcription but CTPBP1 is not essential. Plays a role in synapse formation by regulating SRPX2 levels. The protein is Forkhead box protein P2 (FOXP2) of Pongo pygmaeus (Bornean orangutan).